The following is a 436-amino-acid chain: RNA-binding motif, single-stranded-interacting protein 3 (436 aa).

Residues 28–56 (APAPHPMAPPSPSTNSSSNNSSNNSSGEQ) are disordered. A compositionally biased stretch (pro residues) spans 30-39 (APHPMAPPSP). The span at 40–53 (STNSSSNNSSNNSS) shows a compositional bias: low complexity. RRM domains lie at 60 to 133 (TNLY…MAKQ) and 139 to 224 (TNLY…FADG). Polar residues predominate over residues 398 to 421 (TSPQTVAPSSQDTSGQQQQIAVDT). The disordered stretch occupies residues 398–436 (TSPQTVAPSSQDTSGQQQQIAVDTSNEHAPAYSYQQSKP).

Its subcellular location is the cytoplasm. Binds poly(A) and poly(U) oligoribonucleotides. This Pongo abelii (Sumatran orangutan) protein is RNA-binding motif, single-stranded-interacting protein 3 (RBMS3).